The following is a 312-amino-acid chain: Glycerol-3-phosphate dehydrogenase [NAD(P)+] (312 aa).

NADPH is bound by residues W11, R30, R31, and K95. Sn-glycerol 3-phosphate contacts are provided by K95, G123, and S125. Residue A127 coordinates NADPH. Sn-glycerol 3-phosphate-binding residues include K177, D230, S240, R241, and N242. Catalysis depends on K177, which acts as the Proton acceptor. R241 contributes to the NADPH binding site. NADPH-binding residues include V265 and E267.

Belongs to the NAD-dependent glycerol-3-phosphate dehydrogenase family.

It localises to the cytoplasm. The enzyme catalyses sn-glycerol 3-phosphate + NAD(+) = dihydroxyacetone phosphate + NADH + H(+). It carries out the reaction sn-glycerol 3-phosphate + NADP(+) = dihydroxyacetone phosphate + NADPH + H(+). It functions in the pathway membrane lipid metabolism; glycerophospholipid metabolism. In terms of biological role, catalyzes the reduction of the glycolytic intermediate dihydroxyacetone phosphate (DHAP) to sn-glycerol 3-phosphate (G3P), the key precursor for phospholipid synthesis. In Helicobacter acinonychis (strain Sheeba), this protein is Glycerol-3-phosphate dehydrogenase [NAD(P)+].